Here is a 293-residue protein sequence, read N- to C-terminus: Decaprenyl diphosphate synthase (293 aa).

The disordered stretch occupies residues 1–24 (MATTRGKKTYPQLPPAPDDYPTFP). The active site involves Asp73. Asp73 is a binding site for Mg(2+). Substrate-binding positions include 74–77 (GNGR), Trp78, Arg86, His90, and 118–120 (STE). The active-site Proton acceptor is Asn121. Substrate contacts are provided by residues Trp122, Arg124, Arg241, and 247-249 (RAS). Glu260 contacts Mg(2+).

The protein belongs to the UPP synthase family. In terms of assembly, homodimer. Requires Mg(2+) as cofactor.

The protein localises to the cell membrane. The catalysed reaction is (2Z,6E)-farnesyl diphosphate + 7 isopentenyl diphosphate = (2Z,6Z,10Z,14Z,18Z,22Z,26Z,30Z,34E)-decaprenyl diphosphate + 7 diphosphate. It catalyses the reaction n isopentenyl diphosphate + (2E,6E)-farnesyl diphosphate = a di-trans,poly-cis-polyprenyl diphosphate + n diphosphate. In terms of biological role, catalyzes the sequential condensation of isopentenyl diphosphate (IPP) in the cis configuration with (2Z,6E)-farnesyl diphosphate (Z-FPP or EZ-FPP) generating the 50 carbon product trans,polycis-decaprenyl diphosphate. When (2E,6E)-farnesyl diphosphate (E-FPP or EE-FPP) is used in vitro, both primary products decaprenyl diphosphate and heptaprenyl diphosphate are synthesized. It is probably due to the fact that M.smegmatis synthesizes both (2E,6E,10E)-geranylgeranyl diphosphate (EEE-GGPP) and (2E,6E,10Z)-geranylgeranyl diphosphate (EEZ-GGPP). Can also accept many different allylic substrates, including E-geranyl diphosphate (E-GPP), neryl diphosphate (NPP), and all-trans-geranyl-geranyl diphosphate. The polypeptide is Decaprenyl diphosphate synthase (uppS) (Mycolicibacterium smegmatis (strain ATCC 700084 / mc(2)155) (Mycobacterium smegmatis)).